Consider the following 282-residue polypeptide: E3 ubiquitin-protein ligase Siah1 (282 aa).

Residues M1 to T28 are disordered. An RING-type zinc finger spans residues C41–R76. The interval V90–C282 is SBD. An SIAH-type zinc finger spans residues S93–K153. Positions 98, 105, 117, 121, 128, 135, 147, and 152 each coordinate Zn(2+).

The protein belongs to the SINA (Seven in absentia) family. Homodimer.

The catalysed reaction is S-ubiquitinyl-[E2 ubiquitin-conjugating enzyme]-L-cysteine + [acceptor protein]-L-lysine = [E2 ubiquitin-conjugating enzyme]-L-cysteine + N(6)-ubiquitinyl-[acceptor protein]-L-lysine.. It functions in the pathway protein modification; protein ubiquitination. E3 ubiquitin-protein ligase that mediates ubiquitination and subsequent proteasomal degradation of target proteins. E3 ubiquitin ligases accept ubiquitin from an E2 ubiquitin-conjugating enzyme in the form of a thioester and then directly transfers the ubiquitin to targeted substrates. It probably triggers the ubiquitin-mediated degradation of different substrates. The chain is E3 ubiquitin-protein ligase Siah1 (siah1) from Danio rerio (Zebrafish).